Consider the following 122-residue polypeptide: UPF0102 protein CPF_1959 (122 aa).

This sequence belongs to the UPF0102 family.

The protein is UPF0102 protein CPF_1959 of Clostridium perfringens (strain ATCC 13124 / DSM 756 / JCM 1290 / NCIMB 6125 / NCTC 8237 / Type A).